Here is a 271-residue protein sequence, read N- to C-terminus: Mannosyl-3-phosphoglycerate phosphatase (271 aa).

Asp-13 functions as the Nucleophile in the catalytic mechanism. Residues Asp-13, Asp-15, and Asp-214 each coordinate Mg(2+).

Belongs to the HAD-like hydrolase superfamily. MPGP family. Mg(2+) is required as a cofactor.

Its subcellular location is the cytoplasm. The catalysed reaction is 2-O-(alpha-D-mannosyl)-3-phosphoglycerate + H2O = (2R)-2-O-(alpha-D-mannosyl)-glycerate + phosphate. The protein is Mannosyl-3-phosphoglycerate phosphatase of Escherichia coli (strain SMS-3-5 / SECEC).